The following is a 325-amino-acid chain: Sel1-repeat-containing protein YbeQ (325 aa).

Sel1-like repeat units follow at residues E26 to H61, E63 to H97, A103 to G130, S132 to H167, S168 to N203, H205 to S239, A242 to D275, and Y280 to K305.

This sequence to E.coli YbeT.

The sequence is that of Sel1-repeat-containing protein YbeQ (ybeQ) from Escherichia coli (strain K12).